The primary structure comprises 199 residues: 3-isopropylmalate dehydratase small subunit (199 aa).

Belongs to the LeuD family. LeuD type 1 subfamily. In terms of assembly, heterodimer of LeuC and LeuD.

It carries out the reaction (2R,3S)-3-isopropylmalate = (2S)-2-isopropylmalate. Its pathway is amino-acid biosynthesis; L-leucine biosynthesis; L-leucine from 3-methyl-2-oxobutanoate: step 2/4. Its function is as follows. Catalyzes the isomerization between 2-isopropylmalate and 3-isopropylmalate, via the formation of 2-isopropylmaleate. The polypeptide is 3-isopropylmalate dehydratase small subunit (Bacillus velezensis (strain DSM 23117 / BGSC 10A6 / LMG 26770 / FZB42) (Bacillus amyloliquefaciens subsp. plantarum)).